A 351-amino-acid polypeptide reads, in one-letter code: MSITNSAIYTFPESSFSDNGNIEPLPLKVNEQRKAVPHIRVVRIGDPPKHGSRYLDVFLLGFFEMERSKDRYGSVSDLDDDPSYKVCGSGSLPLGLARYTGNDQELLQAATKLDIEVRRTVKATEMIVYTVQNIKPELYPWSSRLRKGMLFDANKVALAPQCLPLDRGIKFRVIFVNCTAIGSITLFKIPKSMALLSLPNTISINLQVHIKTGIQTDSKGVVQILDEKGEKSLNFMVHLGLIKRKMGRMYSVEYCKQKIEKMRLLFSLGLVGGISLHVNATGSISKTLASQLAFKREICYPLMDLNPHLNLVIWASSVEITRVDAIFQPSLPGEFRYYPNIIAKGVGKIRQ.

This sequence belongs to the morbillivirus/respirovirus/rubulavirus M protein family.

Its subcellular location is the virion. In terms of biological role, plays a crucial role in virus assembly and interacts with the RNP complex as well as with the viral membrane. The chain is Matrix protein (M) from Bos taurus (Bovine).